The sequence spans 572 residues: Formate--tetrahydrofolate ligase (572 aa).

Residue 65-72 (TPLGEGKT) participates in ATP binding.

Belongs to the formate--tetrahydrofolate ligase family.

The catalysed reaction is (6S)-5,6,7,8-tetrahydrofolate + formate + ATP = (6R)-10-formyltetrahydrofolate + ADP + phosphate. It participates in one-carbon metabolism; tetrahydrofolate interconversion. This chain is Formate--tetrahydrofolate ligase, found in Chloroflexus aurantiacus (strain ATCC 29366 / DSM 635 / J-10-fl).